The chain runs to 222 residues: UPF0128 protein TK2294 (222 aa).

It belongs to the UPF0128 family.

In Thermococcus kodakarensis (strain ATCC BAA-918 / JCM 12380 / KOD1) (Pyrococcus kodakaraensis (strain KOD1)), this protein is UPF0128 protein TK2294.